Here is a 161-residue protein sequence, read N- to C-terminus: Putative 4-hydroxy-4-methyl-2-oxoglutarate aldolase (161 aa).

Substrate-binding positions include 75–78 (GDQL) and Arg-97. Asp-98 serves as a coordination point for a divalent metal cation.

Belongs to the class II aldolase/RraA-like family. Homotrimer. Requires a divalent metal cation as cofactor.

The catalysed reaction is 4-hydroxy-4-methyl-2-oxoglutarate = 2 pyruvate. The enzyme catalyses oxaloacetate + H(+) = pyruvate + CO2. Functionally, catalyzes the aldol cleavage of 4-hydroxy-4-methyl-2-oxoglutarate (HMG) into 2 molecules of pyruvate. Also contains a secondary oxaloacetate (OAA) decarboxylase activity due to the common pyruvate enolate transition state formed following C-C bond cleavage in the retro-aldol and decarboxylation reactions. The protein is Putative 4-hydroxy-4-methyl-2-oxoglutarate aldolase of Vibrio cholerae serotype O1 (strain ATCC 39315 / El Tor Inaba N16961).